The primary structure comprises 662 residues: Glycogen debranching enzyme (662 aa).

D338 (nucleophile) is an active-site residue. E373 (proton donor) is an active-site residue.

Belongs to the glycosyl hydrolase 13 family.

The enzyme catalyses Hydrolysis of (1-&gt;6)-alpha-D-glucosidic linkages to branches with degrees of polymerization of three or four glucose residues in limit dextrin.. The protein operates within glycan degradation; glycogen degradation. In terms of biological role, removes maltotriose and maltotetraose chains that are attached by 1,6-alpha-linkage to the limit dextrin main chain, generating a debranched limit dextrin. This chain is Glycogen debranching enzyme, found in Yersinia pseudotuberculosis serotype I (strain IP32953).